Consider the following 245-residue polypeptide: Neurovirulence factor ICP34.5 (245 aa).

Residues 1 to 15 are compositionally biased toward basic residues; that stretch reads MARRRRRHRGPRRPR. The segment at 1 to 17 is required for nucleolar localization; the sequence is MARRRRRHRGPRRPRPP. Disordered regions lie at residues 1–122 and 143–172; these read MARR…PFRL and RRAG…PATP. The span at 25–36 shows a compositional bias: polar residues; sequence TAQSQVTSTPNS. A compositionally biased stretch (acidic residues) spans 67 to 77; that stretch reads ASDDDDDDDWP. Pro residues-rich tracts occupy residues 78–87 and 113–122; these read DSPPPEPAPE and SHPPSRPFRL. A Nuclear export signal motif is present at residues 122 to 131; that stretch reads LPPRLALRLR. 6 consecutive repeat copies span residues 155 to 157, 158 to 160, 161 to 163, 164 to 166, 167 to 169, and 170 to 172. A 6 X 3 AA tandem repeats of A-T-P region spans residues 155 to 172; it reads ATPATPATPATPATPATP. Residues 158–172 are compositionally biased toward low complexity; the sequence is ATPATPATPATPATP. Positions 172 to 185 are binding to PP1CA; sequence PARVRFSPHVRVRH. An interaction with host PPP1CA region spans residues 172–185; sequence PARVRFSPHVRVRH. The important for interferon resistance stretch occupies residues 187 to 245; sequence VVWASAARLARRGSWARERADRARFRRRVAEAEAVIGPCLGPEARARALARGAGPANSV. A Bipartite nuclear localization signal motif is present at residues 197 to 215; that stretch reads RRGSWARERADRARFRRRV. An interaction with host EIF2S1/EIF-2ALPHA region spans residues 215–230; it reads VAEAEAVIGPCLGPEA.

The protein belongs to the PPP1R15 family. As to quaternary structure, interacts with host PPP1CA to form a high-molecular-weight complex that dephosphorylates EIF2S1/eIF-2alpha. Interacts with host EIF2S1/eIF-2alpha; this interaction is crucial for the specific dephosphorylation of EIF2S1/eIF-2alpha by PPP1CA. Binds to proliferating cell nuclear antigen (PCNA), which may release host cells from growth arrest and facilitate viral replication. Interacts (via N-terminus) with host C1QBP and PRKCA. Interacts with protein UL31. Interacts with host TBK1. Interacts with host STING/TMEM173; this interaction inhibits the intracellular DNA sensing pathway. Interacts with host BECN1; this interaction modulates host autophagy.

The protein resides in the host cytoplasm. The protein localises to the host nucleus. Its subcellular location is the host nucleolus. It localises to the virion. Functionally, inhibits the establishment of the immune response and of the integrated stress response (ISR) in the infected cell. Plays essential roles in viral nuclear egress to mediate capsid transit across the nuclear membrane. Facilitates nuclear egress cooperatively with host C1QBP and protein kinase C/PKC to induce lamin A/C phosphorylation and subsequent reorganization. In turn, lamina disassembles and nuclear egress occurs. Recruits the serine/threonine protein phosphatase PPP1CA/PP1-alpha to dephosphorylate the translation initiation factor EIF2S1/eIF-2alpha, thereby couteracting the host shutoff of protein synthesis involving double-stranded RNA-dependent protein kinase EIF2AK2/PKR. In turn, controls host IRF3 activation and subsequently inhibits host interferon response. Controls the DNA sensing pathway by interacting with and inhibiting host STING/TMEM173. Also down-modulates the host MHC class II proteins cell surface expression. Acts as a neurovirulence factor that has a profound effect on the growth of the virus in central nervous system tissue, by interacting with host BECN1 and thereby antagonizing the host autophagy response. This is Neurovirulence factor ICP34.5 (RL1) from Homo sapiens (Human).